The following is a 152-amino-acid chain: Transcriptional repressor NrdR (152 aa).

The segment at Cys3 to Cys34 is a zinc-finger region. An ATP-cone domain is found at Pro49–Ala139.

This sequence belongs to the NrdR family. The cofactor is Zn(2+).

Negatively regulates transcription of bacterial ribonucleotide reductase nrd genes and operons by binding to NrdR-boxes. The polypeptide is Transcriptional repressor NrdR (Psychrobacter arcticus (strain DSM 17307 / VKM B-2377 / 273-4)).